A 301-amino-acid chain; its full sequence is Cilia- and flagella-associated protein 161 (301 aa).

The protein resides in the cytoplasm. The protein localises to the cytoskeleton. It is found in the cilium axoneme. Its function is as follows. Microtubule inner protein (MIP) part of the dynein-decorated doublet microtubules (DMTs) in cilia axoneme, which is required for motile cilia beating. The chain is Cilia- and flagella-associated protein 161 from Danio rerio (Zebrafish).